We begin with the raw amino-acid sequence, 190 residues long: Putative glutathione-dependent formaldehyde-activating enzyme (190 aa).

The CENP-V/GFA domain maps to 19–165 (FKGGKLYCHC…FRKEGLQTYD (147 aa)). Zn(2+) contacts are provided by Cys-26, Cys-28, Cys-47, Cys-49, Cys-52, Cys-94, and Cys-97.

The protein belongs to the Gfa family. The cofactor is Zn(2+).

It catalyses the reaction S-(hydroxymethyl)glutathione = glutathione + formaldehyde. It functions in the pathway one-carbon metabolism; formaldehyde degradation; formate from formaldehyde (glutathione route): step 1/3. Its function is as follows. Catalyzes the condensation of formaldehyde and glutathione to S-hydroxymethylglutathione. The chain is Putative glutathione-dependent formaldehyde-activating enzyme from Phaeosphaeria nodorum (strain SN15 / ATCC MYA-4574 / FGSC 10173) (Glume blotch fungus).